The primary structure comprises 420 residues: D-tagatose-1,6-bisphosphate aldolase subunit GatZ (420 aa).

The protein belongs to the GatZ/KbaZ family. GatZ subfamily. As to quaternary structure, forms a complex with GatY.

It participates in carbohydrate metabolism; D-tagatose 6-phosphate degradation; D-glyceraldehyde 3-phosphate and glycerone phosphate from D-tagatose 6-phosphate: step 2/2. In terms of biological role, component of the tagatose-1,6-bisphosphate aldolase GatYZ that is required for full activity and stability of the Y subunit. Could have a chaperone-like function for the proper and stable folding of GatY. When expressed alone, GatZ does not show any aldolase activity. Is involved in the catabolism of galactitol. The chain is D-tagatose-1,6-bisphosphate aldolase subunit GatZ from Escherichia coli O8 (strain IAI1).